We begin with the raw amino-acid sequence, 339 residues long: Cathepsin B (339 aa).

The signal sequence occupies residues 1–17; that stretch reads MWWSLILLSCLLALTSA. Residues 18–79 constitute a propeptide, activation peptide; that stretch reads HDKPSFHPLS…GRVAFGEDID (62 aa). Intrachain disulfides connect Cys93-Cys122, Cys105-Cys150, Cys141-Cys207, Cys142-Cys146, Cys179-Cys211, and Cys187-Cys198. Cys108 is an active-site residue. An N-linked (GlcNAc...) asparagine glycan is attached at Asn192. Lys220 carries the post-translational modification N6-acetyllysine. Catalysis depends on residues His278 and Asn298. Positions 334 to 339 are excised as a propeptide; it reads QYWGRF.

It belongs to the peptidase C1 family. As to quaternary structure, dimer of a heavy chain and a light chain cross-linked by a disulfide bond. Interacts with SRPX2. Directly interacts with SHKBP1. As to expression, expressed in thyroid epithelial cells.

The protein localises to the lysosome. It localises to the melanosome. It is found in the secreted. Its subcellular location is the extracellular space. The protein resides in the apical cell membrane. It catalyses the reaction Hydrolysis of proteins with broad specificity for peptide bonds. Preferentially cleaves -Arg-Arg-|-Xaa bonds in small molecule substrates (thus differing from cathepsin L). In addition to being an endopeptidase, shows peptidyl-dipeptidase activity, liberating C-terminal dipeptides.. Thiol protease which is believed to participate in intracellular degradation and turnover of proteins. Cleaves matrix extracellular phosphoglycoprotein MEPE. Involved in the solubilization of cross-linked TG/thyroglobulin in the thyroid follicle lumen. Has also been implicated in tumor invasion and metastasis. The sequence is that of Cathepsin B (Ctsb) from Mus musculus (Mouse).